The primary structure comprises 355 residues: uncharacterized protein (355 aa).

An ATP-binding site is contributed by 58 to 65 (GYIIFGIK).

This is an uncharacterized protein from Ureaplasma parvum serovar 3 (strain ATCC 700970).